We begin with the raw amino-acid sequence, 185 residues long: Inner membrane-spanning protein YciB (185 aa).

5 helical membrane-spanning segments follow: residues 19–39 (IHGIYTATEVLIVAAILLMAW), 49–69 (TMTWVSTLLILTFGGLTLYFH), 72–92 (TFIKIKPSILYVLFAAALLFT), 122–142 (GYWIAFFLFGAVLNLIVAYAF), and 150–170 (FKLFGMLAITVIFVLFQAVVI).

It belongs to the YciB family.

The protein localises to the cell inner membrane. Its function is as follows. Plays a role in cell envelope biogenesis, maintenance of cell envelope integrity and membrane homeostasis. This Acidithiobacillus ferrooxidans (strain ATCC 23270 / DSM 14882 / CIP 104768 / NCIMB 8455) (Ferrobacillus ferrooxidans (strain ATCC 23270)) protein is Inner membrane-spanning protein YciB.